The primary structure comprises 155 residues: Small ribosomal subunit protein uS7 (155 aa).

The protein belongs to the universal ribosomal protein uS7 family. As to quaternary structure, part of the 30S ribosomal subunit. Contacts proteins S9 and S11.

One of the primary rRNA binding proteins, it binds directly to 16S rRNA where it nucleates assembly of the head domain of the 30S subunit. Is located at the subunit interface close to the decoding center, probably blocks exit of the E-site tRNA. The sequence is that of Small ribosomal subunit protein uS7 from Sulfurimonas denitrificans (strain ATCC 33889 / DSM 1251) (Thiomicrospira denitrificans (strain ATCC 33889 / DSM 1251)).